A 96-amino-acid polypeptide reads, in one-letter code: Aspartyl/glutamyl-tRNA(Asn/Gln) amidotransferase subunit C (96 aa).

Belongs to the GatC family. As to quaternary structure, heterotrimer of A, B and C subunits.

The enzyme catalyses L-glutamyl-tRNA(Gln) + L-glutamine + ATP + H2O = L-glutaminyl-tRNA(Gln) + L-glutamate + ADP + phosphate + H(+). It catalyses the reaction L-aspartyl-tRNA(Asn) + L-glutamine + ATP + H2O = L-asparaginyl-tRNA(Asn) + L-glutamate + ADP + phosphate + 2 H(+). In terms of biological role, allows the formation of correctly charged Asn-tRNA(Asn) or Gln-tRNA(Gln) through the transamidation of misacylated Asp-tRNA(Asn) or Glu-tRNA(Gln) in organisms which lack either or both of asparaginyl-tRNA or glutaminyl-tRNA synthetases. The reaction takes place in the presence of glutamine and ATP through an activated phospho-Asp-tRNA(Asn) or phospho-Glu-tRNA(Gln). The polypeptide is Aspartyl/glutamyl-tRNA(Asn/Gln) amidotransferase subunit C (Exiguobacterium sibiricum (strain DSM 17290 / CCUG 55495 / CIP 109462 / JCM 13490 / 255-15)).